Consider the following 278-residue polypeptide: Large ribosomal subunit protein uL2 (278 aa).

2 disordered regions span residues 1–58 and 225–278; these read MAIR…GGGH and VMNP…KNKR. Basic residues predominate over residues 37-58; it reads LHGRGGRNAHGRITTRHKGGGH. Residues 253–267 are compositionally biased toward basic and acidic residues; it reads PEGRTRKNKASDKMI. Residues 268–278 show a composition bias toward basic residues; it reads VRRRRTGKNKR.

The protein belongs to the universal ribosomal protein uL2 family. Part of the 50S ribosomal subunit. Forms a bridge to the 30S subunit in the 70S ribosome.

One of the primary rRNA binding proteins. Required for association of the 30S and 50S subunits to form the 70S ribosome, for tRNA binding and peptide bond formation. It has been suggested to have peptidyltransferase activity; this is somewhat controversial. Makes several contacts with the 16S rRNA in the 70S ribosome. The polypeptide is Large ribosomal subunit protein uL2 (Rhodococcus erythropolis (strain PR4 / NBRC 100887)).